The primary structure comprises 203 residues: Octanoyltransferase (203 aa).

The 174-residue stretch at 30 to 203 folds into the BPL/LPL catalytic domain; sequence EDQDNYFFIT…HIIKEGRKLV (174 aa). Substrate-binding positions include 69–76, 135–137, and 148–150; these read RGGSVTFH, SVG, and GIS. The active-site Acyl-thioester intermediate is Cys-166.

This sequence belongs to the LipB family.

The protein localises to the cytoplasm. It carries out the reaction octanoyl-[ACP] + L-lysyl-[protein] = N(6)-octanoyl-L-lysyl-[protein] + holo-[ACP] + H(+). It functions in the pathway protein modification; protein lipoylation via endogenous pathway; protein N(6)-(lipoyl)lysine from octanoyl-[acyl-carrier-protein]: step 1/2. Functionally, catalyzes the transfer of endogenously produced octanoic acid from octanoyl-acyl-carrier-protein onto the lipoyl domains of lipoate-dependent enzymes. Lipoyl-ACP can also act as a substrate although octanoyl-ACP is likely to be the physiological substrate. The protein is Octanoyltransferase of Persephonella marina (strain DSM 14350 / EX-H1).